Reading from the N-terminus, the 437-residue chain is Phosphomethylpyrimidine synthase (437 aa).

Residues Asn69, Met98, Tyr127, His163, 185–187, 226–229, and Glu265 each bind substrate; these read SRG and DACR. Residue His269 coordinates Zn(2+). Tyr292 is a substrate binding site. Zn(2+) is bound at residue His333. [4Fe-4S] cluster contacts are provided by Cys409, Cys412, and Cys416.

It belongs to the ThiC family. The cofactor is [4Fe-4S] cluster.

It catalyses the reaction 5-amino-1-(5-phospho-beta-D-ribosyl)imidazole + S-adenosyl-L-methionine = 4-amino-2-methyl-5-(phosphooxymethyl)pyrimidine + CO + 5'-deoxyadenosine + formate + L-methionine + 3 H(+). It participates in cofactor biosynthesis; thiamine diphosphate biosynthesis. Functionally, catalyzes the synthesis of the hydroxymethylpyrimidine phosphate (HMP-P) moiety of thiamine from aminoimidazole ribotide (AIR) in a radical S-adenosyl-L-methionine (SAM)-dependent reaction. The sequence is that of Phosphomethylpyrimidine synthase from Clostridium novyi (strain NT).